Here is a 210-residue protein sequence, read N- to C-terminus: MTKGILGKKIGMTQIFDEAGRAIPVTVIEAGPCVVVQKKTVEKDGYSAIQVGFEDIKESKLNKPLRGHFAKHGVKPKRFLRELRLKDADKYEVGQEIRVDIFQPGEKVDVTGISKAKGFQGVIKRHGQQRGPMSHGSMYHRRVGSMGSNTFPARTFPGKKMPGRMGGERVTVLNLQVVKVDPDRNLLLVKGSVPGNKNSLLIIRDSVKSK.

The protein belongs to the universal ribosomal protein uL3 family. Part of the 50S ribosomal subunit. Forms a cluster with proteins L14 and L19.

Functionally, one of the primary rRNA binding proteins, it binds directly near the 3'-end of the 23S rRNA, where it nucleates assembly of the 50S subunit. The chain is Large ribosomal subunit protein uL3 from Caldicellulosiruptor bescii (strain ATCC BAA-1888 / DSM 6725 / KCTC 15123 / Z-1320) (Anaerocellum thermophilum).